The sequence spans 313 residues: Homoserine O-succinyltransferase (313 aa).

The active-site Acyl-thioester intermediate is the C142. Residues K163 and S192 each coordinate substrate. The Proton acceptor role is filled by H235. Residue E237 is part of the active site. A substrate-binding site is contributed by R249.

Belongs to the MetA family.

It is found in the cytoplasm. The catalysed reaction is L-homoserine + succinyl-CoA = O-succinyl-L-homoserine + CoA. It participates in amino-acid biosynthesis; L-methionine biosynthesis via de novo pathway; O-succinyl-L-homoserine from L-homoserine: step 1/1. In terms of biological role, transfers a succinyl group from succinyl-CoA to L-homoserine, forming succinyl-L-homoserine. This is Homoserine O-succinyltransferase from Shewanella baltica (strain OS195).